The chain runs to 434 residues: Trigger factor (434 aa).

The region spanning 160-245 (DDKVKMNFIG…LTEVQAANLP (86 aa)) is the PPIase FKBP-type domain.

The protein belongs to the FKBP-type PPIase family. Tig subfamily.

It is found in the cytoplasm. The enzyme catalyses [protein]-peptidylproline (omega=180) = [protein]-peptidylproline (omega=0). Its function is as follows. Involved in protein export. Acts as a chaperone by maintaining the newly synthesized protein in an open conformation. Functions as a peptidyl-prolyl cis-trans isomerase. The chain is Trigger factor from Shewanella frigidimarina (strain NCIMB 400).